A 138-amino-acid chain; its full sequence is ATP synthase epsilon chain 2 (138 aa).

Belongs to the ATPase epsilon chain family. As to quaternary structure, F-type ATPases have 2 components, CF(1) - the catalytic core - and CF(0) - the membrane proton channel. CF(1) has five subunits: alpha(3), beta(3), gamma(1), delta(1), epsilon(1). CF(0) has three main subunits: a, b and c.

Its subcellular location is the cell inner membrane. Functionally, produces ATP from ADP in the presence of a proton gradient across the membrane. The sequence is that of ATP synthase epsilon chain 2 from Syntrophotalea carbinolica (strain DSM 2380 / NBRC 103641 / GraBd1) (Pelobacter carbinolicus).